The following is a 346-amino-acid chain: Porphobilinogen deaminase (346 aa).

At C242 the chain carries S-(dipyrrolylmethanemethyl)cysteine. Positions 317-346 (ATEPGARSGTGAVRPPETDLSNPSPMENPQ) are disordered. The segment covering 335–346 (DLSNPSPMENPQ) has biased composition (polar residues).

It belongs to the HMBS family. Monomer. Requires dipyrromethane as cofactor.

It catalyses the reaction 4 porphobilinogen + H2O = hydroxymethylbilane + 4 NH4(+). Its pathway is porphyrin-containing compound metabolism; protoporphyrin-IX biosynthesis; coproporphyrinogen-III from 5-aminolevulinate: step 2/4. Functionally, tetrapolymerization of the monopyrrole PBG into the hydroxymethylbilane pre-uroporphyrinogen in several discrete steps. This is Porphobilinogen deaminase from Nocardia farcinica (strain IFM 10152).